The following is a 406-amino-acid chain: MSQPITRENFDEWMIPVYAPAPFIPVRGEGSRLWDQQGKEYIDFAGGIAVNALGHAHPELREALNEQASKFWHTGNGYTNEPVLRLAKKLIDATFADRVFFCNSGAEANEAALKLARKFAHDRYGSHKSGIVAFKNAFHGRTLFTVSAGGQPAYSQDFAPLPPDIHHAAYNDINSASALIDDATCAVIVEPIQGEGGVVPASNAFLQGLRELCDRHNALLIFDEVQTGVGRTGELYAYMHYGVTPDLLTTAKALGGGFPVGALLATEECASVMTVGTHGTTYGGNPLASAVAGKVLDLINTPEMLNGVKQRHDWFVERLNSINHHYGLFSEVRGLGLLIGCVLNADYAGQAKQISQEAAKAGVMVLIAGGNVVRFAPALNVSEEEVTTGLDRFAAACEHFVSRGSS.

Lys252 bears the N6-(pyridoxal phosphate)lysine mark.

This sequence belongs to the class-III pyridoxal-phosphate-dependent aminotransferase family. AstC subfamily. It depends on pyridoxal 5'-phosphate as a cofactor.

It carries out the reaction N(2)-succinyl-L-ornithine + 2-oxoglutarate = N-succinyl-L-glutamate 5-semialdehyde + L-glutamate. The protein operates within amino-acid degradation; L-arginine degradation via AST pathway; L-glutamate and succinate from L-arginine: step 3/5. Its function is as follows. Catalyzes the transamination of N(2)-succinylornithine and alpha-ketoglutarate into N(2)-succinylglutamate semialdehyde and glutamate. Can also act as an acetylornithine aminotransferase. This is Succinylornithine transaminase from Escherichia coli (strain SMS-3-5 / SECEC).